The following is a 969-amino-acid chain: Bifunctional glutamine synthetase adenylyltransferase/adenylyl-removing enzyme (969 aa).

The interval 1 to 456 is adenylyl removase; the sequence is MNWQANIHKL…HFEQLFAAPH (456 aa). Residues 466–969 are adenylyl transferase; it reads EKRLAEVWLG…SALLEDESAK (504 aa).

The protein belongs to the GlnE family. Mg(2+) serves as cofactor.

It carries out the reaction [glutamine synthetase]-O(4)-(5'-adenylyl)-L-tyrosine + phosphate = [glutamine synthetase]-L-tyrosine + ADP. The enzyme catalyses [glutamine synthetase]-L-tyrosine + ATP = [glutamine synthetase]-O(4)-(5'-adenylyl)-L-tyrosine + diphosphate. In terms of biological role, involved in the regulation of glutamine synthetase GlnA, a key enzyme in the process to assimilate ammonia. When cellular nitrogen levels are high, the C-terminal adenylyl transferase (AT) inactivates GlnA by covalent transfer of an adenylyl group from ATP to specific tyrosine residue of GlnA, thus reducing its activity. Conversely, when nitrogen levels are low, the N-terminal adenylyl removase (AR) activates GlnA by removing the adenylyl group by phosphorolysis, increasing its activity. The regulatory region of GlnE binds the signal transduction protein PII (GlnB) which indicates the nitrogen status of the cell. This chain is Bifunctional glutamine synthetase adenylyltransferase/adenylyl-removing enzyme, found in Nitrosococcus oceani (strain ATCC 19707 / BCRC 17464 / JCM 30415 / NCIMB 11848 / C-107).